A 692-amino-acid polypeptide reads, in one-letter code: Elongation factor G (692 aa).

A tr-type G domain is found at 8–282; the sequence is ENTRNIGIMA…AVIDYLPSPL (275 aa). GTP is bound by residues 17 to 24, 81 to 85, and 135 to 138; these read AHIDAGKT, DTPGH, and NKMD.

This sequence belongs to the TRAFAC class translation factor GTPase superfamily. Classic translation factor GTPase family. EF-G/EF-2 subfamily.

The protein localises to the cytoplasm. Its function is as follows. Catalyzes the GTP-dependent ribosomal translocation step during translation elongation. During this step, the ribosome changes from the pre-translocational (PRE) to the post-translocational (POST) state as the newly formed A-site-bound peptidyl-tRNA and P-site-bound deacylated tRNA move to the P and E sites, respectively. Catalyzes the coordinated movement of the two tRNA molecules, the mRNA and conformational changes in the ribosome. This Bacillus cereus (strain ZK / E33L) protein is Elongation factor G.